The sequence spans 195 residues: Xanthine phosphoribosyltransferase (195 aa).

L20 and N27 together coordinate xanthine. 128–132 (ANGQA) is a binding site for 5-phospho-alpha-D-ribose 1-diphosphate. K156 is a binding site for xanthine.

This sequence belongs to the purine/pyrimidine phosphoribosyltransferase family. Xpt subfamily. As to quaternary structure, homodimer.

The protein resides in the cytoplasm. The catalysed reaction is XMP + diphosphate = xanthine + 5-phospho-alpha-D-ribose 1-diphosphate. The protein operates within purine metabolism; XMP biosynthesis via salvage pathway; XMP from xanthine: step 1/1. Its function is as follows. Converts the preformed base xanthine, a product of nucleic acid breakdown, to xanthosine 5'-monophosphate (XMP), so it can be reused for RNA or DNA synthesis. The sequence is that of Xanthine phosphoribosyltransferase from Latilactobacillus sakei subsp. sakei (strain 23K) (Lactobacillus sakei subsp. sakei).